Consider the following 359-residue polypeptide: Aspartate carbamoyltransferase catalytic subunit (359 aa).

Positions 52 and 53 each coordinate carbamoyl phosphate. Lysine 81 contributes to the L-aspartate binding site. Arginine 102, histidine 130, and glutamine 133 together coordinate carbamoyl phosphate. Positions 163 and 224 each coordinate L-aspartate. Residues leucine 264 and proline 265 each coordinate carbamoyl phosphate.

The protein belongs to the aspartate/ornithine carbamoyltransferase superfamily. ATCase family. As to quaternary structure, heterododecamer (2C3:3R2) of six catalytic PyrB chains organized as two trimers (C3), and six regulatory PyrI chains organized as three dimers (R2).

The catalysed reaction is carbamoyl phosphate + L-aspartate = N-carbamoyl-L-aspartate + phosphate + H(+). It participates in pyrimidine metabolism; UMP biosynthesis via de novo pathway; (S)-dihydroorotate from bicarbonate: step 2/3. In terms of biological role, catalyzes the condensation of carbamoyl phosphate and aspartate to form carbamoyl aspartate and inorganic phosphate, the committed step in the de novo pyrimidine nucleotide biosynthesis pathway. This chain is Aspartate carbamoyltransferase catalytic subunit, found in Brachyspira hyodysenteriae (strain ATCC 49526 / WA1).